A 410-amino-acid polypeptide reads, in one-letter code: D-amino acid dehydrogenase (410 aa).

9 to 14 (GGGIVG) contributes to the FAD binding site.

The protein belongs to the DadA oxidoreductase family. FAD is required as a cofactor.

Its subcellular location is the cell inner membrane. The catalysed reaction is a D-alpha-amino acid + a quinone + H2O = a 2-oxocarboxylate + a quinol + NH4(+). Functionally, catalyzes the oxidative deamination of D-amino acids. Has broad substrate specificity; is mostly active on D-proline, and to a lesser extent, on several other D-amino acids such as D-alanine, D-phenylalanine and D-serine. Mediates electron transport from D-proline to coenzyme Q1 in vitro, and is involved in the electron transport chain from D-proline to the c-type cytochrome in vivo. In Helicobacter pylori (strain J99 / ATCC 700824) (Campylobacter pylori J99), this protein is D-amino acid dehydrogenase.